We begin with the raw amino-acid sequence, 590 residues long: Aspartate--tRNA(Asp/Asn) ligase (590 aa).

Glutamate 170 is an L-aspartate binding site. Positions 194–197 (QLFK) are aspartate. Arginine 216 provides a ligand contact to L-aspartate. ATP contacts are provided by residues 216-218 (RDE) and glutamine 225. An L-aspartate-binding site is contributed by histidine 448. Glutamate 482 is an ATP binding site. Residue arginine 489 coordinates L-aspartate. 534–537 (GWDR) is an ATP binding site. Residues 557–590 (SGGGADPLTGAPAPITPQQRRESGIDAKPKKDGE) are disordered. The segment covering 575–590 (QRRESGIDAKPKKDGE) has biased composition (basic and acidic residues).

This sequence belongs to the class-II aminoacyl-tRNA synthetase family. Type 1 subfamily. In terms of assembly, homodimer.

Its subcellular location is the cytoplasm. The enzyme catalyses tRNA(Asx) + L-aspartate + ATP = L-aspartyl-tRNA(Asx) + AMP + diphosphate. In terms of biological role, aspartyl-tRNA synthetase with relaxed tRNA specificity since it is able to aspartylate not only its cognate tRNA(Asp) but also tRNA(Asn). Reaction proceeds in two steps: L-aspartate is first activated by ATP to form Asp-AMP and then transferred to the acceptor end of tRNA(Asp/Asn). The chain is Aspartate--tRNA(Asp/Asn) ligase from Mycobacterium sp. (strain KMS).